The sequence spans 280 residues: UPF0328 protein ECU06_0020/ECU06_1700 (280 aa).

The protein belongs to the UPF0328 family.

The polypeptide is UPF0328 protein ECU06_0020/ECU06_1700 (Encephalitozoon cuniculi (strain GB-M1) (Microsporidian parasite)).